We begin with the raw amino-acid sequence, 309 residues long: Cyclin-dependent kinase B1-1 (309 aa).

The region spanning 4–301 (YEKLEKVGEG…AKTALDHPYF (298 aa)) is the Protein kinase domain. ATP-binding positions include 10–18 (VGEGTYGKV) and lysine 33. Tyrosine 15 bears the Phosphotyrosine mark. Aspartate 142 functions as the Proton acceptor in the catalytic mechanism. Threonine 176 is subject to Phosphothreonine; by CAK.

This sequence belongs to the protein kinase superfamily. CMGC Ser/Thr protein kinase family. CDC2/CDKX subfamily. Interacts with CKS1. Interacts with CYCU3-1. Interacts with SIM, SMR1 and SMR2. Highly expressed in guard cells and stomatal precursor cells of cotyledons. Expressed in roots, stems, flowers and siliques.

It is found in the nucleus. It carries out the reaction L-seryl-[protein] + ATP = O-phospho-L-seryl-[protein] + ADP + H(+). The catalysed reaction is L-threonyl-[protein] + ATP = O-phospho-L-threonyl-[protein] + ADP + H(+). The enzyme catalyses [DNA-directed RNA polymerase] + ATP = phospho-[DNA-directed RNA polymerase] + ADP + H(+). Its activity is regulated as follows. Phosphorylation at Thr-14 or Tyr-15 inactivates the enzyme, while phosphorylation at Thr-176 activates it. May control G2/M (mitosis) phase progression. Plays a role in regulating seedling growth in darkness via regulation of hypocotyl cell elongation and cotyledon cell development. Plays a role in stomatal development. Required to suppress endoreduplication. Together with CDKB1-2, promotes both the last division in the stomatal cell lineage as well as the number of stomata. In collaboration with MYB124 and MYB88, restrict the G1/S transition and chloroplast and nuclear number during stomatal formation, and normally maintain fate and developmental progression throughout the stomatal cell lineage. The protein is Cyclin-dependent kinase B1-1 (CDKB1-1) of Arabidopsis thaliana (Mouse-ear cress).